A 178-amino-acid polypeptide reads, in one-letter code: Large ribosomal subunit protein bL25 (178 aa).

The protein belongs to the bacterial ribosomal protein bL25 family. CTC subfamily. In terms of assembly, part of the 50S ribosomal subunit; part of the 5S rRNA/L5/L18/L25 subcomplex. Contacts the 5S rRNA. Binds to the 5S rRNA independently of L5 and L18.

Its function is as follows. This is one of the proteins that binds to the 5S RNA in the ribosome where it forms part of the central protuberance. The chain is Large ribosomal subunit protein bL25 from Campylobacter jejuni subsp. jejuni serotype O:23/36 (strain 81-176).